The primary structure comprises 1252 residues: DNA-directed RNA polymerase subunit beta (1252 aa).

This sequence belongs to the RNA polymerase beta chain family. The RNAP catalytic core consists of 2 alpha, 1 beta, 1 beta' and 1 omega subunit. When a sigma factor is associated with the core the holoenzyme is formed, which can initiate transcription.

It carries out the reaction RNA(n) + a ribonucleoside 5'-triphosphate = RNA(n+1) + diphosphate. In terms of biological role, DNA-dependent RNA polymerase catalyzes the transcription of DNA into RNA using the four ribonucleoside triphosphates as substrates. The sequence is that of DNA-directed RNA polymerase subunit beta from Chlamydia trachomatis serovar L2 (strain ATCC VR-902B / DSM 19102 / 434/Bu).